The chain runs to 598 residues: Nicotinamide riboside transporter 1 (598 aa).

Helical transmembrane passes span 48 to 68, 71 to 91, 112 to 132, 174 to 194, 197 to 217, 241 to 261, 273 to 293, 372 to 392, 395 to 415, 447 to 467, and 484 to 504; these read LAYWGAVSFTAGTWMSGSAAL, GLSYPETIVSFLLGNVLTIIF, FVFGIYGSAFGIIIRILMSIV, LVGFIIFHVLTALCYFMKPYH, YLLIWSCVATCFAMLGIVIYL, AWAWVYMISYWFGSISPGSTN, LAIWTGSVCALLIPATLVPIF, GALFCACISWACLPWNFYNSS, FLTVMSSFGVVMTPIIAVMIC, AIVAWVCGMAPGLPGIAWEVN, and SFFSFLISFFVYWGLCVFFPF. Phosphoserine occurs at positions 560 and 572.

Belongs to the purine-cytosine permease (2.A.39) family.

The protein resides in the cell membrane. In terms of biological role, high-affinity pH-dependent nicotinamide riboside transporter which also transports thiamine with low affinity. Involved in 5-fluorocytosine sensitivity. The sequence is that of Nicotinamide riboside transporter 1 (NRT1) from Saccharomyces cerevisiae (strain ATCC 204508 / S288c) (Baker's yeast).